The following is a 425-amino-acid chain: Serine--tRNA ligase (425 aa).

The segment at 110–134 is disordered; sequence NLPSADAPEGKSEADNVEVKRWGEP. The span at 117–134 shows a compositional bias: basic and acidic residues; that stretch reads PEGKSEADNVEVKRWGEP. L-serine is bound at residue 233–235; the sequence is TAE. Position 264–266 (264–266) interacts with ATP; that stretch reads RRE. Residue glutamate 287 coordinates L-serine. 351–354 contributes to the ATP binding site; it reads EISS. Position 385 (serine 385) interacts with L-serine.

This sequence belongs to the class-II aminoacyl-tRNA synthetase family. Type-1 seryl-tRNA synthetase subfamily. In terms of assembly, homodimer. The tRNA molecule binds across the dimer.

It is found in the cytoplasm. The enzyme catalyses tRNA(Ser) + L-serine + ATP = L-seryl-tRNA(Ser) + AMP + diphosphate + H(+). It carries out the reaction tRNA(Sec) + L-serine + ATP = L-seryl-tRNA(Sec) + AMP + diphosphate + H(+). The protein operates within aminoacyl-tRNA biosynthesis; selenocysteinyl-tRNA(Sec) biosynthesis; L-seryl-tRNA(Sec) from L-serine and tRNA(Sec): step 1/1. Catalyzes the attachment of serine to tRNA(Ser). Is also able to aminoacylate tRNA(Sec) with serine, to form the misacylated tRNA L-seryl-tRNA(Sec), which will be further converted into selenocysteinyl-tRNA(Sec). The sequence is that of Serine--tRNA ligase from Synechococcus sp. (strain RCC307).